Here is a 589-residue protein sequence, read N- to C-terminus: Arginine--tRNA ligase (589 aa).

Residues 131–141 (ANPTGPLHVGH) carry the 'HIGH' region motif.

The protein belongs to the class-I aminoacyl-tRNA synthetase family. As to quaternary structure, monomer.

It is found in the cytoplasm. It catalyses the reaction tRNA(Arg) + L-arginine + ATP = L-arginyl-tRNA(Arg) + AMP + diphosphate. The chain is Arginine--tRNA ligase from Legionella pneumophila (strain Paris).